The chain runs to 235 residues: Large ribosomal subunit protein uL1 (235 aa).

It belongs to the universal ribosomal protein uL1 family. As to quaternary structure, part of the 50S ribosomal subunit.

Binds directly to 23S rRNA. The L1 stalk is quite mobile in the ribosome, and is involved in E site tRNA release. Its function is as follows. Protein L1 is also a translational repressor protein, it controls the translation of the L11 operon by binding to its mRNA. The sequence is that of Large ribosomal subunit protein uL1 from Prochlorococcus marinus (strain MIT 9303).